The chain runs to 106 residues: ATP-dependent Clp protease adapter protein ClpS (106 aa).

This sequence belongs to the ClpS family. As to quaternary structure, binds to the N-terminal domain of the chaperone ClpA.

In terms of biological role, involved in the modulation of the specificity of the ClpAP-mediated ATP-dependent protein degradation. This chain is ATP-dependent Clp protease adapter protein ClpS, found in Edwardsiella ictaluri (strain 93-146).